A 304-amino-acid chain; its full sequence is UTP--glucose-1-phosphate uridylyltransferase 1 (304 aa).

Belongs to the UDPGP type 2 family.

It catalyses the reaction alpha-D-glucose 1-phosphate + UTP + H(+) = UDP-alpha-D-glucose + diphosphate. Its pathway is carbohydrate metabolism; nucleotide-sugar metabolism. In Streptococcus pyogenes serotype M18 (strain MGAS8232), this protein is UTP--glucose-1-phosphate uridylyltransferase 1 (hasC1).